A 493-amino-acid polypeptide reads, in one-letter code: Keratin, type II cuticular Hb3 (493 aa).

The tract at residues 1–111 (MTCGFSTVGS…PNAQCVKQEE (111 aa)) is head. The IF rod domain occupies 111–422 (EKEQIKCLNN…RLLEGEEQRL (312 aa)). Residues 112 to 146 (KEQIKCLNNRFAAFIDKVRFLEQQNKLLETKLQFY) form a coil 1A region. The linker 1 stretch occupies residues 147 to 156 (QNRQCCESNL). The segment at 157-257 (EPLFEGYIET…YEEEIRVLQA (101 aa)) is coil 1B. A Glycyl lysine isopeptide (Lys-Gly) (interchain with G-Cter in SUMO1) cross-link involves residue Lys-217. The tract at residues 258-274 (NISDTSVIVKMDNSRGL) is linker 12. The segment at 275–418 (NMDNIVAEIK…ATYRRLLEGE (144 aa)) is coil 2. The segment at 419 to 493 (EQRLCEGVGA…GGGSCSLGRC (75 aa)) is tail.

Belongs to the intermediate filament family. As to quaternary structure, heterotetramer of two type I and two type II keratins.

The chain is Keratin, type II cuticular Hb3 from Bos taurus (Bovine).